The following is a 110-amino-acid chain: UPF0060 membrane protein ASA_2267 (110 aa).

A run of 4 helical transmembrane segments spans residues 7–27 (IGLF…PYLW), 33–53 (SVWL…LLSL), 63–83 (AAYG…VDGI), and 87–107 (LWDL…MFAP).

The protein belongs to the UPF0060 family.

It is found in the cell inner membrane. The sequence is that of UPF0060 membrane protein ASA_2267 from Aeromonas salmonicida (strain A449).